An 81-amino-acid polypeptide reads, in one-letter code: Short neurotoxin 2 (81 aa).

An N-terminal signal peptide occupies residues 1-21 (MKTLLLTLVVVTIVCLDLGYT). 4 cysteine pairs are disulfide-bonded: Cys-24/Cys-43, Cys-38/Cys-60, Cys-62/Cys-73, and Cys-74/Cys-79.

The protein belongs to the three-finger toxin family. Short-chain subfamily. Type I alpha-neurotoxin sub-subfamily. Expressed by the venom gland.

The protein localises to the secreted. Its function is as follows. Binds to muscle nicotinic acetylcholine receptor (nAChR) and inhibit acetylcholine from binding to the receptor, thereby impairing neuromuscular transmission. The sequence is that of Short neurotoxin 2 from Tropidechis carinatus (Australian rough-scaled snake).